A 541-amino-acid chain; its full sequence is MHTLIKGVLEEILEEEVIIEYPKDREHGHYATPIAFNLAKVFKKSPLVIAEELALKISTHKKTQGLFDSVVACKGYINFTLSLGFLERFTQKALELKEQFGSQIKSERSQKIFLEFVSANPTGPLHIGHARGAVFGDSLAKIARFLGHEVLCEYYVNDMGSQIRLLGLSVWLAYREHVLKESVTYPEVFYKGEYIIEIAKKANNDLEPSLFKENEETIIGVLSGYAKDLMLLEIKDNLDALGIHFDSYASEKEVFKHKDAVFERLEKANALYEKDSKIWLKSSLYQDESDRVLVKEDKSYTYLTGDVIYHDKKFKQDYTKYINIWGADHHGYIARVKASLEFLGYDSNKLEVLLAQMVRLLKDNEPYKMSKRAGNFILIKDVVDDVGRDALRFIFLSKRLDTHLEFDVNTLKKQDSSNPIYYIHYANSRIHTMLEKSPFSKEEVLQTPLKNLNAEEKYLLFSALSLPKAIESSFEEYGLQKMCEYAKTLASEFHRFYNAGKILDTPKTKELLKICLMVSLSLTNAFKLLGIEIKTKISAKD.

The 'HIGH' region motif lies at 119-129; it reads ANPTGPLHIGH.

The protein belongs to the class-I aminoacyl-tRNA synthetase family. Monomer.

It localises to the cytoplasm. The catalysed reaction is tRNA(Arg) + L-arginine + ATP = L-arginyl-tRNA(Arg) + AMP + diphosphate. This chain is Arginine--tRNA ligase, found in Helicobacter pylori (strain G27).